The sequence spans 737 residues: Transcriptional repressor CTCF (737 aa).

Residue M1 is modified to N-acetylmethionine. A Glycyl lysine isopeptide (Lys-Gly) (interchain with G-Cter in SUMO2) cross-link involves residue K18. A Glycyl lysine isopeptide (Lys-Gly) (interchain with G-Cter in SUMO) cross-link involves residue K74. Positions Q180–K211 are disordered. Positions K202 to K211 are enriched in basic residues. Residue K219 forms a Glycyl lysine isopeptide (Lys-Gly) (interchain with G-Cter in SUMO2) linkage. A C2H2-type 1 zinc finger spans residues F266 to H288. A Phosphothreonine modification is found at T289. Residues H294 to H316 form a C2H2-type 2 zinc finger. A Phosphothreonine modification is found at T317. 2 consecutive C2H2-type zinc fingers follow at residues H322 to H345 and F351 to H373. Position 374 is a phosphothreonine (T374). Residues F379–H401 form a C2H2-type 5 zinc finger. Residue S402 is modified to Phosphoserine. 5 consecutive C2H2-type zinc fingers follow at residues Y407–H430, F437–H460, K467–H489, F495–H517, and Y523–H546. The segment at F555–C577 adopts a C2H2-type 11; atypical zinc-finger fold. 2 disordered regions span residues H573–N687 and K699–T727. Positions K593–S604 are enriched in basic residues. Residues S609, S610, and S612 each carry the phosphoserine modification. The segment covering S610–P636 has biased composition (acidic residues). Pro residues predominate over residues E637 to P657. Residues R668–N687 show a composition bias toward polar residues. K699 is covalently cross-linked (Glycyl lysine isopeptide (Lys-Gly) (interchain with G-Cter in SUMO); alternate). A Glycyl lysine isopeptide (Lys-Gly) (interchain with G-Cter in SUMO2); alternate cross-link involves residue K699. The span at A704–A714 shows a compositional bias: acidic residues.

It belongs to the CTCF zinc-finger protein family. In terms of assembly, interacts with CHD8. Interacts with LLPH. Interacts with CENPE. Interacts with BRD2; promoting BRD2 recruitment to chromatin. Sumoylated on Lys-74 and Lys-699; sumoylation of CTCF contributes to the repressive function of CTCF on the MYC P2 promoter.

The protein localises to the nucleus. It is found in the nucleoplasm. Its subcellular location is the chromosome. The protein resides in the centromere. Functionally, chromatin binding factor that binds to DNA sequence specific sites and regulates the 3D structure of chromatin. Binds together strands of DNA, thus forming chromatin loops, and anchors DNA to cellular structures, such as the nuclear lamina. Defines the boundaries between active and heterochromatic DNA via binding to chromatin insulators, thereby preventing interaction between promoter and nearby enhancers and silencers. Plays a critical role in the epigenetic regulation. Participates in the allele-specific gene expression at the imprinted IGF2/H19 gene locus. On the maternal allele, binding within the H19 imprinting control region (ICR) mediates maternally inherited higher-order chromatin conformation to restrict enhancer access to IGF2. Mediates interchromosomal association between IGF2/H19 and WSB1/NF1 and may direct distant DNA segments to a common transcription factory. Regulates asynchronous replication of IGF2/H19. Plays a critical role in gene silencing over considerable distances in the genome. Preferentially interacts with unmethylated DNA, preventing spreading of CpG methylation and maintaining methylation-free zones. Inversely, binding to target sites is prevented by CpG methylation. Plays an important role in chromatin remodeling. Can dimerize when it is bound to different DNA sequences, mediating long-range chromatin looping. Causes local loss of histone acetylation and gain of histone methylation in the beta-globin locus, without affecting transcription. When bound to chromatin, it provides an anchor point for nucleosomes positioning. Seems to be essential for homologous X-chromosome pairing. May participate with Tsix in establishing a regulatable epigenetic switch for X chromosome inactivation. May play a role in preventing the propagation of stable methylation at the escape genes from X-inactivation. Involved in sister chromatid cohesion. Associates with both centromeres and chromosomal arms during metaphase and required for cohesin localization to CTCF sites. Plays a role in the recruitment of CENPE to the pericentromeric/centromeric regions of the chromosome during mitosis. Acts as a transcriptional repressor binding to promoters of vertebrate MYC gene and BAG1 gene. Also binds to the PLK and PIM1 promoters. Acts as a transcriptional activator of APP. Regulates APOA1/C3/A4/A5 gene cluster and controls MHC class II gene expression. Plays an essential role in oocyte and preimplantation embryo development by activating or repressing transcription. Seems to act as tumor suppressor. The chain is Transcriptional repressor CTCF (Ctcf) from Rattus norvegicus (Rat).